Here is a 530-residue protein sequence, read N- to C-terminus: Histone-arginine methyltransferase CARMER (530 aa).

The SAM-dependent MTase PRMT-type domain occupies 141-450 (ASQYFQFYGY…QSYDVTIDLH (310 aa)). The S-adenosyl-L-methionine site is built by Gln-154, Arg-163, Gly-187, Glu-209, Glu-238, and Thr-266. Arg-501 carries the asymmetric dimethylarginine; by autocatalysis modification.

This sequence belongs to the class I-like SAM-binding methyltransferase superfamily. Protein arginine N-methyltransferase family. Homodimer. Post-translationally, the dimethylated protein is the major form.

Its subcellular location is the cytoplasm. It localises to the nucleus. It carries out the reaction L-arginyl-[protein] + 2 S-adenosyl-L-methionine = N(omega),N(omega)-dimethyl-L-arginyl-[protein] + 2 S-adenosyl-L-homocysteine + 2 H(+). Methylates (mono- and asymmetric dimethylation) the guanidino nitrogens of arginyl residues in proteins. May methylate histone H3 at 'Arg-17' and activate transcription via chromatin remodeling. This chain is Histone-arginine methyltransferase CARMER (Art4), found in Drosophila erecta (Fruit fly).